A 486-amino-acid polypeptide reads, in one-letter code: Malonate-semialdehyde dehydrogenase (486 aa).

NAD(+) contacts are provided by F154, K178, E181, R182, and S231. The active-site Nucleophile is the C286. Position 386 (E386) interacts with NAD(+).

It belongs to the aldehyde dehydrogenase family. IolA subfamily. Homotetramer.

It catalyses the reaction 3-oxopropanoate + NAD(+) + CoA + H2O = hydrogencarbonate + acetyl-CoA + NADH + H(+). It carries out the reaction 2-methyl-3-oxopropanoate + NAD(+) + CoA + H2O = propanoyl-CoA + hydrogencarbonate + NADH + H(+). It functions in the pathway polyol metabolism; myo-inositol degradation into acetyl-CoA; acetyl-CoA from myo-inositol: step 7/7. Its function is as follows. Catalyzes the oxidation of malonate semialdehyde (MSA) and methylmalonate semialdehyde (MMSA) into acetyl-CoA and propanoyl-CoA, respectively. Is involved in a myo-inositol catabolic pathway. Bicarbonate, and not CO2, is the end-product of the enzymatic reaction. This Bacillus cereus (strain ATCC 14579 / DSM 31 / CCUG 7414 / JCM 2152 / NBRC 15305 / NCIMB 9373 / NCTC 2599 / NRRL B-3711) protein is Malonate-semialdehyde dehydrogenase.